A 142-amino-acid chain; its full sequence is Transcriptional regulator MraZ (142 aa).

SpoVT-AbrB domains lie at 5-47 and 76-119; these read NYQH…TNQE and SLTV…DINA.

Belongs to the MraZ family. As to quaternary structure, forms oligomers.

The protein resides in the cytoplasm. It localises to the nucleoid. The sequence is that of Transcriptional regulator MraZ from Mycoplasmoides gallisepticum (strain R(low / passage 15 / clone 2)) (Mycoplasma gallisepticum).